Consider the following 223-residue polypeptide: DNA mismatch repair protein MutH (223 aa).

This sequence belongs to the MutH family.

It is found in the cytoplasm. Its function is as follows. Sequence-specific endonuclease that cleaves unmethylated GATC sequences. It is involved in DNA mismatch repair. The polypeptide is DNA mismatch repair protein MutH (Shewanella sp. (strain MR-7)).